Consider the following 69-residue polypeptide: Light-harvesting protein B-1015 beta chain (69 aa).

At 2-21 the chain is on the cytoplasmic side; sequence ADLKPSLTGLTEEEAKEFHG. 2 residues coordinate a bacteriochlorophyll: H20 and H38. A helical transmembrane segment spans residues 22–44; sequence IFVTSTVLYLATAVIVHYLVWTA. The Periplasmic segment spans residues 45–56; it reads RPWIAPIPKGWV. The propeptide occupies 57-69; sequence NLEGVQSALSYLV.

It belongs to the antenna complex beta subunit family. In terms of assembly, the core complex is formed by different alpha and beta chains, binding bacteriochlorophyll molecules, and arranged most probably in tetrameric structures disposed around the reaction center. The non-pigmented gamma chains may constitute additional components.

It is found in the cell inner membrane. Its function is as follows. Antenna complexes are light-harvesting systems, which transfer the excitation energy to the reaction centers. The polypeptide is Light-harvesting protein B-1015 beta chain (pufB) (Blastochloris viridis (Rhodopseudomonas viridis)).